A 374-amino-acid chain; its full sequence is Anhydro-N-acetylmuramic acid kinase (374 aa).

12-19 (GTSLDGVD) lines the ATP pocket.

Belongs to the anhydro-N-acetylmuramic acid kinase family.

It catalyses the reaction 1,6-anhydro-N-acetyl-beta-muramate + ATP + H2O = N-acetyl-D-muramate 6-phosphate + ADP + H(+). It functions in the pathway amino-sugar metabolism; 1,6-anhydro-N-acetylmuramate degradation. Its pathway is cell wall biogenesis; peptidoglycan recycling. Catalyzes the specific phosphorylation of 1,6-anhydro-N-acetylmuramic acid (anhMurNAc) with the simultaneous cleavage of the 1,6-anhydro ring, generating MurNAc-6-P. Is required for the utilization of anhMurNAc either imported from the medium or derived from its own cell wall murein, and thus plays a role in cell wall recycling. This Escherichia fergusonii (strain ATCC 35469 / DSM 13698 / CCUG 18766 / IAM 14443 / JCM 21226 / LMG 7866 / NBRC 102419 / NCTC 12128 / CDC 0568-73) protein is Anhydro-N-acetylmuramic acid kinase.